The sequence spans 129 residues: uncharacterized protein (129 aa).

It to M.pneumoniae MPN_376 N-terminal region.

This is an uncharacterized protein from Mycoplasma pneumoniae (strain ATCC 29342 / M129 / Subtype 1) (Mycoplasmoides pneumoniae).